Consider the following 505-residue polypeptide: DNA repair protein RadA (505 aa).

The C4-type zinc finger occupies 10-27 (CSACGADHAQWFGRCPKC). 107 to 114 (GDPGIGKS) lines the ATP pocket. The short motif at 281–285 (KNRFG) is the RadA KNRFG motif element. The tract at residues 380–505 (DAYLSVAGGL…KIEEDLGKKD (126 aa)) is lon-protease-like. A disordered region spans residues 485–505 (NTTDQGNGSEAKIEEDLGKKD). Basic and acidic residues predominate over residues 495–505 (AKIEEDLGKKD).

Belongs to the RecA family. RadA subfamily.

Functionally, DNA-dependent ATPase involved in processing of recombination intermediates, plays a role in repairing DNA breaks. Stimulates the branch migration of RecA-mediated strand transfer reactions, allowing the 3' invading strand to extend heteroduplex DNA faster. Binds ssDNA in the presence of ADP but not other nucleotides, has ATPase activity that is stimulated by ssDNA and various branched DNA structures, but inhibited by SSB. Does not have RecA's homology-searching function. In Synechocystis sp. (strain ATCC 27184 / PCC 6803 / Kazusa), this protein is DNA repair protein RadA.